Consider the following 374-residue polypeptide: Translocating chain-associated membrane protein 1 (374 aa).

Residues 1–29 (MAIRKKSTKSPPVLSHEFVLQNHADIVSC) lie on the Cytoplasmic side of the membrane. A helical membrane pass occupies residues 30-50 (VAMVFLLGLMFEITAKASIIF). The Lumenal segment spans residues 51 to 76 (VTLQYNVTLPATEEQATESASLYYYG). N56 is a glycosylation site (N-linked (GlcNAc...) asparagine). Residues 77-97 (IKDLATVFFYMLVAIIIHAVI) form a helical membrane-spanning segment. Residues 98–121 (QEYMLDKINRRMHFSKTKHSKFNE) lie on the Cytoplasmic side of the membrane. The TLC domain occupies 117–326 (SKFNESGQLS…NFQLRRWREH (210 aa)). A helical membrane pass occupies residues 122 to 142 (SGQLSAFYLFACVWGTFILIS). Residues 143 to 159 (ENYISDPTILWRAYPHN) lie on the Lumenal side of the membrane. The chain crosses the membrane as a helical span at residues 160-180 (LMTFQMKFFYISQLAYWLHAF). Residues 181-192 (PELYFQKTKRED) lie on the Cytoplasmic side of the membrane. Residues 193 to 213 (IPRQLVYIGLYLFHIAGAYLL) form a helical membrane-spanning segment. N214 is a topological domain (lumenal). A helical transmembrane segment spans residues 215–235 (LNHLGLVLLVLHYFVEFLFHI). Topologically, residues 236 to 251 (SRLFYFSNEKYQKGFS) are cytoplasmic. Residues 252–272 (LWAVLFVLGRLLTLILSVLTV) traverse the membrane as a helical segment. Residues 273–297 (GFGLARAENQKLDFSTGNFNVLAVR) lie on the Lumenal side of the membrane. A helical membrane pass occupies residues 298 to 318 (IAVLASICITQAFMVWKFINF). Residues 319–374 (QLRRWREHSAFQAPAVKKKPTVTKGRSSKKGTENGVNGTLTSNVADSPRNKKEKSS) lie on the Cytoplasmic side of the membrane. A compositionally biased stretch (basic residues) spans 334–347 (VKKKPTVTKGRSSK). The disordered stretch occupies residues 334–374 (VKKKPTVTKGRSSKKGTENGVNGTLTSNVADSPRNKKEKSS). Positions 352–363 (NGVNGTLTSNVA) are enriched in polar residues. S365 is subject to Phosphoserine.

The protein belongs to the TRAM family. Interacts with SEC61B. May interact with Derlin-1/DERL1. Post-translationally, N-glycosylated.

The protein resides in the endoplasmic reticulum membrane. Its function is as follows. Involved in the translocation of nascent protein chains into or through the endoplasmic reticulum (ER) membrane by facilitating the proper chain positioning at the SEC61 channel. Regulates the exposure of nascent secretory protein chain to the cytosol during translocation into the ER. May affect the phospholipid bilayer in the vicinity of the lateral gate of the SEC61 channel, thereby facilitating ER protein transport. Intimately associates with transmembrane (TM) domain of nascent membrane proteins during the entire integration process into the ER membrane. Associates with the second TM domain of G-protein-coupled receptor opsin/OPSD nascent chain in the ER membrane, which may facilitate its integration into the membrane. Under conditions of ER stress, participates in the disposal of misfolded ER membrane proteins during the unfolded protein response (UPR), an integrated stress response (ISR) pathway, by selectively retrotranslocating misfolded ER-membrane proteins from the ER into the cytosol where they are ubiquitinated and degraded by the proteasome. The sequence is that of Translocating chain-associated membrane protein 1 (TRAM1) from Pongo abelii (Sumatran orangutan).